Here is a 90-residue protein sequence, read N- to C-terminus: Small ribosomal subunit protein bS16 (90 aa).

It belongs to the bacterial ribosomal protein bS16 family.

This Streptococcus pneumoniae (strain Hungary19A-6) protein is Small ribosomal subunit protein bS16.